The following is an 804-amino-acid chain: Endoplasmin (804 aa).

The first 21 residues, 1–21 (MRVLWVLGLCCVLLTFGFVRA), serve as a signal peptide directing secretion. Positions 42-44 (SRT) match the SRT pseudosubstrate motif motif. Asn62 is a glycosylation site (N-linked (GlcNAc...) asparagine). The residue at position 64 (Ser64) is a Phosphoserine. An N-linked (GlcNAc...) asparagine glycan is attached at Asn107. Residues Asn107, Asp149, and Asn162 each contribute to the ATP site. Position 168 is an N6-(2-hydroxyisobutyryl)lysine (Lys168). A Phosphoserine modification is found at Ser172. Residue Phe199 participates in ATP binding. Residue Asn217 is glycosylated (N-linked (GlcNAc...) asparagine). A disordered region spans residues 288–323 (TVEEPLEEDETAQEEKEEADDEAAVEEEEEEKKPKT). Acidic residues predominate over residues 289-317 (VEEPLEEDETAQEEKEEADDEAAVEEEEE). The residue at position 403 (Ser403) is a Phosphoserine. The residue at position 404 (Lys404) is an N6-succinyllysine. Asn445 carries an N-linked (GlcNAc...) asparagine glycan. A Phosphoserine modification is found at Ser447. Lys479 is modified (N6-acetyllysine). N-linked (GlcNAc...) asparagine glycosylation is found at Asn481 and Asn502. An N6-succinyllysine modification is found at Lys633. The segment at 749 to 804 (IDPEAQVEEEPEEEPEDTTEDTTDDSEQDEEETDAGAEEEEEEQETEKEPTEKDEL) is disordered. The segment covering 753 to 794 (AQVEEEPEEEPEDTTEDTTDDSEQDEEETDAGAEEEEEEQET) has biased composition (acidic residues). Residues 795 to 804 (EKEPTEKDEL) are compositionally biased toward basic and acidic residues. The Prevents secretion from ER motif lies at 801 to 804 (KDEL).

It belongs to the heat shock protein 90 family. As to quaternary structure, homodimer; disulfide-linked. Component of an EIF2 complex at least composed of CELF1/CUGBP1, CALR, CALR3, EIF2S1, EIF2S2, HSP90B1 and HSPA5. Part of a large chaperone multiprotein complex comprising DNAJB11, HSP90B1, HSPA5, HYOU, PDIA2, PDIA4, PDIA6, PPIB, SDF2L1, UGGT1 and very small amounts of ERP29, but not, or at very low levels, CALR nor CANX. Interacts with AIMP1; regulates its retention in the endoplasmic reticulum. Hyperglycosylated form interacts with OS9; promoting its degradation by the endoplasmic reticulum associated degradation (ERAD). Interacts with CNPY3. This interaction is disrupted in the presence of ATP. Interacts with TLR4 and TLR9, but not with TLR3. Interacts with MZB1 in a calcium-dependent manner. Interacts with METTL23. Interacts with IL1B; the interaction facilitates cargo translocation into the ERGIC. Interacts with EIF2AK3. Phosphorylated by CK2. In terms of processing, N-glycosylated cotranslationally at Asn-217 by STT3A-containing OST-A complex: this glycosylation is constitutive. In response to various stress, 5 additional facultative sites (Asn-62, Asn-107, Asn-445, Asn-481 and Asn-502) can be glycosylated post-translationally by STT3B-containing OST-B complex, leading to a hyperglycosylated form that is degraded by the ER-associated degradation (ERAD) pathway. In normal conditions, the OST-A complex together with CCDC134 prevent glycosylation at facultative sites during protein folding, thereby preventing hyperglycosylation. Mechanistically, nascent HSP90B1 is tethered during translation to a specialized CCDC134-containing translocon that forms a microenvironment for its folding, in which STT3A associates with the SRT pseudosubstrate motif, and prevents access to facultative glycosylation sites until folding is completed, rendering its facultative sites inaccessible to the OST-B complex.

Its subcellular location is the endoplasmic reticulum lumen. It localises to the sarcoplasmic reticulum lumen. The protein localises to the melanosome. It carries out the reaction ATP + H2O = ADP + phosphate + H(+). Functionally, ATP-dependent chaperone involved in the processing of proteins in the endoplasmic reticulum, regulating their transport. Together with MESD, acts as a modulator of the Wnt pathway by promoting the folding of LRP6, a coreceptor of the canonical Wnt pathway. When associated with CNPY3, required for proper folding of Toll-like receptors. Promotes folding and trafficking of TLR4 to the cell surface. May participate in the unfolding of cytosolic leaderless cargos (lacking the secretion signal sequence) such as the interleukin 1/IL-1 to facilitate their translocation into the ERGIC (endoplasmic reticulum-Golgi intermediate compartment) and secretion; the translocation process is mediated by the cargo receptor TMED10. The chain is Endoplasmin from Rattus norvegicus (Rat).